The following is a 188-amino-acid chain: Dual specificity protein phosphatase 18 (188 aa).

The Tyrosine-protein phosphatase domain occupies 19–160; sequence GLSQITSSLY…LIHYEFQLFG (142 aa). The interval 95–141 is sufficient for mitochondrial localization; that stretch reads MKQGRTLLHCAAGVSRSAALCLAYLMKYHAMSLLDAHTWTKSCRPII. Cys-104 acts as the Phosphocysteine intermediate in catalysis.

This sequence belongs to the protein-tyrosine phosphatase family. Non-receptor class dual specificity subfamily.

The protein resides in the cytoplasm. It is found in the nucleus. It localises to the mitochondrion inner membrane. It carries out the reaction O-phospho-L-tyrosyl-[protein] + H2O = L-tyrosyl-[protein] + phosphate. The enzyme catalyses O-phospho-L-seryl-[protein] + H2O = L-seryl-[protein] + phosphate. It catalyses the reaction O-phospho-L-threonyl-[protein] + H2O = L-threonyl-[protein] + phosphate. Its function is as follows. Can dephosphorylate single and diphosphorylated synthetic MAPK peptides, with preference for the phosphotyrosine and diphosphorylated forms over phosphothreonine. In vitro, dephosphorylates p-nitrophenyl phosphate (pNPP). This chain is Dual specificity protein phosphatase 18 (DUSP18), found in Bos taurus (Bovine).